The chain runs to 287 residues: Isopentenyl-diphosphate Delta-isomerase 1, chloroplastic (287 aa).

The transit peptide at 1–51 (MTLLLNTTAKLYIAPRTLPFTSSSTFARSPFLRIPSLLKPLSPLTARVSLS) directs the protein to the chloroplast. A substrate-binding site is contributed by lysine 90. Histidine 94 and histidine 106 together coordinate Mg(2+). Residues 104 to 256 (LLHRAFSVFL…GLKLSPWFRL (153 aa)) enclose the Nudix hydrolase domain. Substrate is bound by residues arginine 125 and lysine 129. Cysteine 141 is an active-site residue. Serine 142 contacts substrate. Residues 142–172 (SHPLYRESELIDEESLGARNAAQRKLLDELG) carry the Nudix box motif. Residues glutamate 201 and glutamate 203 each contribute to the Mg(2+) site. The active site involves glutamate 203.

This sequence belongs to the IPP isomerase type 1 family. As to quaternary structure, monomer. The cofactor is Mg(2+). In terms of tissue distribution, mainly expressed in roots and trichomes and, to a lower extent, in leaves, flowers and stems.

The protein localises to the plastid. Its subcellular location is the chloroplast. The enzyme catalyses isopentenyl diphosphate = dimethylallyl diphosphate. It functions in the pathway isoprenoid biosynthesis; dimethylallyl diphosphate biosynthesis; dimethylallyl diphosphate from isopentenyl diphosphate: step 1/1. The protein operates within porphyrin-containing compound metabolism; chlorophyll biosynthesis. Functionally, catalyzes the 1,3-allylic rearrangement of the homoallylic substrate isopentenyl (IPP) to its highly electrophilic allylic isomer, dimethylallyl diphosphate (DMAPP). The sequence is that of Isopentenyl-diphosphate Delta-isomerase 1, chloroplastic from Cannabis sativa (Hemp).